The primary structure comprises 284 residues: Tropomyosin (284 aa).

Residues 1–284 (MDAIKKKMQA…DMTFTELIGN (284 aa)) adopt a coiled-coil conformation.

The protein belongs to the tropomyosin family. In terms of assembly, homodimer.

Functionally, tropomyosin, in association with the troponin complex, plays a central role in the calcium dependent regulation of muscle contraction. The sequence is that of Tropomyosin from Periplaneta fuliginosa (Smokybrown cockroach).